A 218-amino-acid chain; its full sequence is Pyridoxine/pyridoxamine 5'-phosphate oxidase (218 aa).

Substrate-binding positions include 14-17 (RREY) and lysine 72. FMN-binding positions include 67 to 72 (RIVLLK), 82 to 83 (YT), arginine 88, lysine 89, and glutamine 111. Substrate contacts are provided by tyrosine 129, arginine 133, and serine 137. FMN-binding positions include 146 to 147 (QS) and tryptophan 191. 197-199 (RLH) provides a ligand contact to substrate. Arginine 201 is an FMN binding site.

The protein belongs to the pyridoxamine 5'-phosphate oxidase family. In terms of assembly, homodimer. FMN serves as cofactor.

The catalysed reaction is pyridoxamine 5'-phosphate + O2 + H2O = pyridoxal 5'-phosphate + H2O2 + NH4(+). It catalyses the reaction pyridoxine 5'-phosphate + O2 = pyridoxal 5'-phosphate + H2O2. The protein operates within cofactor metabolism; pyridoxal 5'-phosphate salvage; pyridoxal 5'-phosphate from pyridoxamine 5'-phosphate: step 1/1. It participates in cofactor metabolism; pyridoxal 5'-phosphate salvage; pyridoxal 5'-phosphate from pyridoxine 5'-phosphate: step 1/1. In terms of biological role, catalyzes the oxidation of either pyridoxine 5'-phosphate (PNP) or pyridoxamine 5'-phosphate (PMP) into pyridoxal 5'-phosphate (PLP). The polypeptide is Pyridoxine/pyridoxamine 5'-phosphate oxidase (Escherichia coli (strain SMS-3-5 / SECEC)).